The following is a 315-amino-acid chain: Ribosomal RNA small subunit methyltransferase H (315 aa).

Residues 33–35 (GGH), aspartate 52, phenylalanine 84, aspartate 106, and glutamine 113 contribute to the S-adenosyl-L-methionine site.

It belongs to the methyltransferase superfamily. RsmH family.

It is found in the cytoplasm. It carries out the reaction cytidine(1402) in 16S rRNA + S-adenosyl-L-methionine = N(4)-methylcytidine(1402) in 16S rRNA + S-adenosyl-L-homocysteine + H(+). Its function is as follows. Specifically methylates the N4 position of cytidine in position 1402 (C1402) of 16S rRNA. This chain is Ribosomal RNA small subunit methyltransferase H, found in Lactobacillus acidophilus (strain ATCC 700396 / NCK56 / N2 / NCFM).